Reading from the N-terminus, the 306-residue chain is Homoserine kinase (306 aa).

Pro88–Thr98 is an ATP binding site.

This sequence belongs to the GHMP kinase family. Homoserine kinase subfamily.

It is found in the cytoplasm. It catalyses the reaction L-homoserine + ATP = O-phospho-L-homoserine + ADP + H(+). The protein operates within amino-acid biosynthesis; L-threonine biosynthesis; L-threonine from L-aspartate: step 4/5. In terms of biological role, catalyzes the ATP-dependent phosphorylation of L-homoserine to L-homoserine phosphate. In Synechococcus sp. (strain ATCC 27144 / PCC 6301 / SAUG 1402/1) (Anacystis nidulans), this protein is Homoserine kinase.